The following is a 279-amino-acid chain: Small ribosomal subunit protein uS2 (279 aa).

Belongs to the universal ribosomal protein uS2 family. Component of the small ribosomal subunit. Mature ribosomes consist of a small (40S) and a large (60S) subunit. The 40S subunit contains about 33 different proteins and 1 molecule of RNA (18S). The 60S subunit contains about 49 different proteins and 3 molecules of RNA (28S, 5.8S and 5S). Interacts with ribosomal protein S21.

Its subcellular location is the cytoplasm. Its function is as follows. Required for the assembly and/or stability of the 40S ribosomal subunit. Required for the processing of the 20S rRNA-precursor to mature 18S rRNA in a late step of the maturation of 40S ribosomal subunits. This is Small ribosomal subunit protein uS2 from Schistosoma japonicum (Blood fluke).